The primary structure comprises 59 residues: Potassium channel toxin alpha-KTx 1.2 (59 aa).

Residues 1-22 form the signal peptide; it reads MKILSVLLLALIICSIIDWSEG. Residue Q23 is modified to Pyrrolidone carboxylic acid. Intrachain disulfides connect C29/C50, C35/C55, and C39/C57. Residues 48–55 form an interaction with Ca(2+)-activated K(+) channels region; sequence GKCMNKKC.

It belongs to the short scorpion toxin superfamily. Potassium channel inhibitor family. Alpha-KTx 01 subfamily. Expressed by the venom gland.

It is found in the secreted. In terms of biological role, blocks calcium-activated potassium channels (Kd=43 nM on KCa1.1/KCNMA1). Has a potent presynaptic facilitatory action, with less effect on direct muscle stimulation. The protein is Potassium channel toxin alpha-KTx 1.2 of Leiurus hebraeus (Hebrew deathstalker scorpion).